We begin with the raw amino-acid sequence, 119 residues long: MQAKAILRHTPTSPRKMRLVAGLVRGKAVDQAKAILLNSTKAASRNALQTLKSAVANYAQLNPDERVGDQELFVKSVFVDEGATLKRMLPAPMGRAYRVRKRSNHLTIIVDKVKNPETK.

This sequence belongs to the universal ribosomal protein uL22 family. In terms of assembly, part of the 50S ribosomal subunit.

This protein binds specifically to 23S rRNA; its binding is stimulated by other ribosomal proteins, e.g. L4, L17, and L20. It is important during the early stages of 50S assembly. It makes multiple contacts with different domains of the 23S rRNA in the assembled 50S subunit and ribosome. Functionally, the globular domain of the protein is located near the polypeptide exit tunnel on the outside of the subunit, while an extended beta-hairpin is found that lines the wall of the exit tunnel in the center of the 70S ribosome. In Chlorobium luteolum (strain DSM 273 / BCRC 81028 / 2530) (Pelodictyon luteolum), this protein is Large ribosomal subunit protein uL22.